Consider the following 127-residue polypeptide: Small ribosomal subunit protein bS16 (127 aa).

A disordered region spans residues 80-127 (GLKKRPTRNNPHKGEPGKKAQERIAAAKQAAEEAAAAKTESAPISEEV). A compositionally biased stretch (basic residues) spans 81–90 (LKKRPTRNNP). Over residues 91–101 (HKGEPGKKAQE) the composition is skewed to basic and acidic residues. Low complexity predominate over residues 102–121 (RIAAAKQAAEEAAAAKTESA).

Belongs to the bacterial ribosomal protein bS16 family.

The protein is Small ribosomal subunit protein bS16 of Bartonella henselae (strain ATCC 49882 / DSM 28221 / CCUG 30454 / Houston 1) (Rochalimaea henselae).